Consider the following 630-residue polypeptide: UvrABC system protein C (630 aa).

A disordered region spans residues Met1 to Gly96. A compositionally biased stretch (low complexity) spans Glu9–His28. A GIY-YIG domain is found at Asp52 to Val125. A compositionally biased stretch (basic and acidic residues) spans Arg75–Arg91. Residues Asp234–Phe269 enclose the UVR domain.

This sequence belongs to the UvrC family. In terms of assembly, interacts with UvrB in an incision complex.

It is found in the cytoplasm. Its function is as follows. The UvrABC repair system catalyzes the recognition and processing of DNA lesions. UvrC both incises the 5' and 3' sides of the lesion. The N-terminal half is responsible for the 3' incision and the C-terminal half is responsible for the 5' incision. This Thermus thermophilus (strain ATCC BAA-163 / DSM 7039 / HB27) protein is UvrABC system protein C.